Reading from the N-terminus, the 119-residue chain is Ribonuclease P protein component (119 aa).

It belongs to the RnpA family. Consists of a catalytic RNA component (M1 or rnpB) and a protein subunit.

It carries out the reaction Endonucleolytic cleavage of RNA, removing 5'-extranucleotides from tRNA precursor.. RNaseP catalyzes the removal of the 5'-leader sequence from pre-tRNA to produce the mature 5'-terminus. It can also cleave other RNA substrates such as 4.5S RNA. The protein component plays an auxiliary but essential role in vivo by binding to the 5'-leader sequence and broadening the substrate specificity of the ribozyme. The sequence is that of Ribonuclease P protein component from Salmonella arizonae (strain ATCC BAA-731 / CDC346-86 / RSK2980).